Consider the following 148-residue polypeptide: UPF0178 protein Pcar_2632 (148 aa).

Belongs to the UPF0178 family.

The protein is UPF0178 protein Pcar_2632 of Syntrophotalea carbinolica (strain DSM 2380 / NBRC 103641 / GraBd1) (Pelobacter carbinolicus).